The following is a 994-amino-acid chain: Sarcoplasmic/endoplasmic reticulum calcium ATPase 1 (994 aa).

Residues 1 to 48 (MEAAHSKSTEECLSYFGVSETTGLTPDQVKRHLEKYGPNELPAEEGKS) are Cytoplasmic-facing. The helical transmembrane segment at 49-69 (LWELVVEQFEDLLVRILLLAA) threads the bilayer. At 70–89 (CISFVLAWFEEGEETVTAFV) the chain is on the lumenal side. The chain crosses the membrane as a helical span at residues 90-110 (EPFVILLILIANAIVGVWQER). Topologically, residues 111–253 (NAENAIEALK…QDKTPLQQKL (143 aa)) are cytoplasmic. The helical transmembrane segment at 254-273 (DEFGEQLSKVISLICVAVWL) threads the bilayer. Residues 274 to 295 (INIGHFNDPVHGGSWFRGAIYY) lie on the Lumenal side of the membrane. The chain crosses the membrane as a helical span at residues 296–313 (FKIAVALAVAAIPEGLPA). The Ca(2+) site is built by Val-304, Ala-305, Ile-307, and Glu-309. The Cytoplasmic segment spans residues 314–757 (VITTCLALGT…EEGRAIYNNM (444 aa)). Residue Asp-351 is the 4-aspartylphosphate intermediate of the active site. Positions 351 and 353 each coordinate Mg(2+). Residue Thr-353 participates in ATP binding. Position 441 is a phosphothreonine (Thr-441). 4 residues coordinate ATP: Glu-442, Arg-489, Lys-515, and Arg-560. Thr-569 carries the post-translational modification Phosphothreonine. Ser-581 carries the post-translational modification Phosphoserine. Residues Thr-625, Gly-626, and Asp-627 each coordinate ATP. Phosphoserine is present on Ser-643. Residues Arg-678 and Lys-684 each contribute to the ATP site. Residue Asp-703 participates in Mg(2+) binding. Asn-706 serves as a coordination point for ATP. Residues 758-777 (KQFIRYLISSNVGEVVCIFL) traverse the membrane as a helical segment. Residues Asn-768 and Glu-771 each coordinate Ca(2+). At 778 to 787 (TAALGLPEAL) the chain is on the lumenal side. Residues 788–808 (IPVQLLWVNLVTDGLPATALG) form a helical membrane-spanning segment. The interval 788-808 (IPVQLLWVNLVTDGLPATALG) is interaction with PLN. The Ca(2+) site is built by Asn-796, Thr-799, and Asp-800. The Cytoplasmic segment spans residues 809-828 (FNPPDLDIMDRPPRSPKEPL). A helical membrane pass occupies residues 829–851 (ISGWLFFRYMAIGGYVGAATVGA). The Lumenal segment spans residues 852–897 (AAWWFLYAEDGPHVSYHQLTHFMQCTEHNPEFDGLDCEVFEAPEPM). Residues Cys-876 and Cys-888 are joined by a disulfide bond. The helical transmembrane segment at 898–917 (TMALSVLVTIEMCNALNSLS) threads the bilayer. Glu-908 contacts Ca(2+). The Cytoplasmic portion of the chain corresponds to 918–930 (ENQSLLRMPPWVN). The helical transmembrane segment at 931 to 949 (IWLLGSICLSMSLHFLILY) threads the bilayer. The tract at residues 932 to 943 (WLLGSICLSMSL) is interaction with PLN. The Lumenal portion of the chain corresponds to 950–964 (VDPLPMIFKLRALDF). A helical transmembrane segment spans residues 965 to 985 (TQWLMVLKISLPVIGLDELLK). The Cytoplasmic segment spans residues 986–994 (FIARNYLEG).

Belongs to the cation transport ATPase (P-type) (TC 3.A.3) family. Type IIA subfamily. Interacts with sarcolipin (SLN). Interacts with phospholamban (PLN). Interacts with myoregulin (MRLN). Interacts with DWORF. Interacts with VMP1. Requires Mg(2+) as cofactor.

The protein localises to the endoplasmic reticulum membrane. It localises to the sarcoplasmic reticulum membrane. It carries out the reaction Ca(2+)(in) + ATP + H2O = Ca(2+)(out) + ADP + phosphate + H(+). With respect to regulation, inhibited by sarcolipin (SLN) and myoregulin (MRLN). Has also been shown to be reversibly inhibited by phospholamban (PLN) at low calcium concentrations in vitro. Dephosphorylated PLN decreases the apparent affinity of the ATPase for calcium in vitro and this inhibition is regulated by the phosphorylation of PLN. Enhanced by DWORF; DWORF increases activity by displacing sarcolipin (SLN), phospholamban (PLN) and myoregulin (MRLN). Key regulator of striated muscle performance by acting as the major Ca(2+) ATPase responsible for the reuptake of cytosolic Ca(2+) into the sarcoplasmic reticulum. Catalyzes the hydrolysis of ATP coupled with the translocation of calcium from the cytosol to the sarcoplasmic reticulum lumen. Contributes to calcium sequestration involved in muscular excitation/contraction. The chain is Sarcoplasmic/endoplasmic reticulum calcium ATPase 1 (Atp2a1) from Mus musculus (Mouse).